A 130-amino-acid polypeptide reads, in one-letter code: Small ribosomal subunit protein uS8 (130 aa).

The protein belongs to the universal ribosomal protein uS8 family. As to quaternary structure, part of the 30S ribosomal subunit.

In terms of biological role, one of the primary rRNA binding proteins, it binds directly to 16S rRNA central domain where it helps coordinate assembly of the platform of the 30S subunit. This is Small ribosomal subunit protein uS8 from Methanococcus vannielii (strain ATCC 35089 / DSM 1224 / JCM 13029 / OCM 148 / SB).